Reading from the N-terminus, the 299-residue chain is Ribosomal protein L11 methyltransferase (299 aa).

Thr144, Gly165, Asp187, and Asn229 together coordinate S-adenosyl-L-methionine.

The protein belongs to the methyltransferase superfamily. PrmA family.

The protein localises to the cytoplasm. It carries out the reaction L-lysyl-[protein] + 3 S-adenosyl-L-methionine = N(6),N(6),N(6)-trimethyl-L-lysyl-[protein] + 3 S-adenosyl-L-homocysteine + 3 H(+). Functionally, methylates ribosomal protein L11. This Teredinibacter turnerae (strain ATCC 39867 / T7901) protein is Ribosomal protein L11 methyltransferase.